Reading from the N-terminus, the 141-residue chain is Hemoglobin subunit alpha-D (141 aa).

A Globin domain is found at 1–141 (MLTADDKKLL…VAAVLAEKYR (141 aa)). H58 and H87 together coordinate heme b.

It belongs to the globin family. Heterotetramer of two alpha-D chains and two beta chains. Red blood cells.

Involved in oxygen transport from the lung to the various peripheral tissues. The protein is Hemoglobin subunit alpha-D (HBAD) of Anser anser anser (Western greylag goose).